The chain runs to 598 residues: Nuclear receptor subfamily 4 group A member 2 (598 aa).

A disordered region spans residues 1 to 22 (MPCVQAQYGSSPQGASPASQSY). Residues 8 to 22 (YGSSPQGASPASQSY) are compositionally biased toward low complexity. A DNA-binding region (nuclear receptor) is located at residues 260–335 (EGLCAVCGDN…VGMVKEVVRT (76 aa)). 2 consecutive NR C4-type zinc fingers follow at residues 263-283 (CAVC…CEGC) and 299-323 (CLAN…FQKC). The short motif at 287–314 (FKRTVQKNAKYVCLANKNCPVDKRRRNR) is the Bipartite nuclear localization signal (NLS1) element. A disordered region spans residues 337-361 (SLKGRRGRLPSKPKSPQEPSPPSPP). Residues 338-350 (LKGRRGRLPSKPK) carry the Nuclear localization signal (NLS1) motif. Positions 352 to 361 (PQEPSPPSPP) are enriched in pro residues. The 236-residue stretch at 360–595 (PPVSLISALV…AIIDKLFLDT (236 aa)) folds into the NR LBD domain. Positions 443 to 452 (FLELFVLRLA) match the nuclear export sequence (NES1) motif. The nuclear export sequence (NES2) signature appears at 568–577 (QGLQRIFYLK).

The protein belongs to the nuclear hormone receptor family. NR4 subfamily. As to quaternary structure, interacts with SFPQ, NCOR2, SIN3A and HADC1. The interaction with NCOR2 increases in the absence of PITX3. Interacts with PER2. As to expression, expressed in a number of cell lines of T-cell, B-cell and fibroblast origin. Strong expression in brain tissue.

The protein resides in the cytoplasm. Its subcellular location is the nucleus. Functionally, transcriptional regulator which is important for the differentiation and maintenance of meso-diencephalic dopaminergic (mdDA) neurons during development. It is crucial for expression of a set of genes such as SLC6A3, SLC18A2, TH and DRD2 which are essential for development of mdDA neurons. The sequence is that of Nuclear receptor subfamily 4 group A member 2 (NR4A2) from Homo sapiens (Human).